The primary structure comprises 98 residues: MSSYKYYDLIRKPIITEKTTNISEQNKYAFYVDKFAKKLTVKKAIEEIFKVKVKKVNILNVKGKKKTFKGITGTQINRKKAIVTLEKDHNIDFAGGIK.

This sequence belongs to the universal ribosomal protein uL23 family. As to quaternary structure, part of the 50S ribosomal subunit. Contacts protein L29, and trigger factor when it is bound to the ribosome.

One of the early assembly proteins it binds 23S rRNA. One of the proteins that surrounds the polypeptide exit tunnel on the outside of the ribosome. Forms the main docking site for trigger factor binding to the ribosome. This is Large ribosomal subunit protein uL23 from Rickettsia akari (strain Hartford).